We begin with the raw amino-acid sequence, 416 residues long: MNKQSWLLNLSLLKTHPAFRAVFLARFISIVSLGLLGVAVPVQIQMMTHSTWQVGLSVTLTGGAMFVGLMVGGVLADRYERKKVILLARGTCGIGFIGLCLNALLPEPSLLAIYLLGLWDGFFASLGVTALLAATPALVGRENLMQAGAITMLTVRLGSVISPMIGGLLLATGGVAWNYGLAAAGTFITLLPLLSLPALPPPPQPREHPLKSLLAGFRFLLASPLVGGIALLGGLLTMASAVRVLYPALADNWQMSAAQIGFLYAAIPLGAAIGALTSGKLAHSARPGLLMLLSTLGSFLAIGLFGLMPMWILGVVCLALFGWLSAVSSLLQYTMLQTQTPEAMLGRINGLWTAQNVTGDAIGAALLGGLGAMMTPVASASASGFGLLIIGVLLLLVLVELRRFRQTPPQMTASDS.

Over Met1–Ala21 the chain is Cytoplasmic. Residues Val22–Val42 traverse the membrane as a helical segment. The Periplasmic portion of the chain corresponds to Gln43–Gly55. The helical transmembrane segment at Leu56–Ala76 threads the bilayer. The Cytoplasmic portion of the chain corresponds to Asp77–Lys83. Residues Val84–Leu104 traverse the membrane as a helical segment. Residues Leu105 to Ser109 lie on the Periplasmic side of the membrane. A helical membrane pass occupies residues Leu110–Ala130. The Cytoplasmic segment spans residues Leu131–Arg156. A helical membrane pass occupies residues Leu157 to Trp177. Position 178 (Asn178) is a topological domain, periplasmic. The chain crosses the membrane as a helical span at residues Tyr179–Leu199. The Cytoplasmic portion of the chain corresponds to Pro200 to Arg218. A helical membrane pass occupies residues Phe219–Ala239. Over Ser240–Ser256 the chain is Periplasmic. A helical membrane pass occupies residues Ala257–Thr277. At Ser278 to Pro287 the chain is on the cytoplasmic side. The chain crosses the membrane as a helical span at residues Gly288 to Leu307. At Met308 to Leu313 the chain is on the periplasmic side. A helical membrane pass occupies residues Gly314–Leu336. Residues Gln337–Asn356 are Cytoplasmic-facing. The chain crosses the membrane as a helical span at residues Val357–Val377. Residue Ala378 is a topological domain, periplasmic. A helical membrane pass occupies residues Ser379 to Val399. The Cytoplasmic segment spans residues Glu400–Ser416.

The protein belongs to the major facilitator superfamily. EntS (TC 2.A.1.38) family.

It is found in the cell inner membrane. Functionally, component of an export pathway for enterobactin. The sequence is that of Enterobactin exporter EntS from Escherichia coli O7:K1 (strain IAI39 / ExPEC).